A 228-amino-acid polypeptide reads, in one-letter code: Isonitrile hydratase (228 aa).

The active site involves cysteine 101.

In terms of assembly, homodimer.

It carries out the reaction N-cyclohexylformamide = cyclohexyl isocyanide + H2O. Sensitive to thiol reagents and oxidizing reagents, but is not influenced by chelators or reducing reagents. Its function is as follows. Catalyzes the hydration of cyclohexyl isocyanide to N-cyclohexylformamide. Acts on various isonitriles, but not on nitriles or amides. Probably involved in detoxification. The chain is Isonitrile hydratase (inhA) from Pseudomonas putida (Arthrobacter siderocapsulatus).